A 2269-amino-acid polypeptide reads, in one-letter code: Neuron navigator 3 (2269 aa).

Positions 55 to 162 (SKICKIYTDW…LFFILSRYKQ (108 aa)) constitute a Calponin-homology (CH) domain. Residues 186-207 (TGAAQLSQHKTQDMQSSLTARY) are compositionally biased toward polar residues. Disordered stretches follow at residues 186 to 358 (TGAA…RSML) and 388 to 532 (SEFG…NKGS). The segment covering 236-252 (GSGSNSSKGSSNLNRRS) has biased composition (low complexity). Composition is skewed to polar residues over residues 267–291 (ASGNDRGSMNGSGSVPSSTSGQQLA) and 305–319 (SKSMNMKHSATSSML). The span at 323–333 (PPSPTSSPTPP) shows a compositional bias: pro residues. A compositionally biased stretch (polar residues) spans 346-356 (ASKSAPGNQRS). Low complexity predominate over residues 411–432 (PSASAFAPPSKSNNCKNHNNKS). Over residues 505–518 (TATSKPAGTQSCVP) the composition is skewed to polar residues. Residues 644 to 672 (ETRRMRTVKNIADLRQNLEETMSSLRGTQ) adopt a coiled-coil conformation. 6 disordered regions span residues 692–737 (GRGL…STTV), 756–776 (ASGARGAEPGEKGGISEVGPE), 836–1036 (VKEM…IPGP), 1050–1079 (SGSATLGKVPKSACIGKSTGISNGRKTSLD), 1097–1412 (VPLQ…GTTC), and 1461–1487 (GGSATSLEERPRGMSRSGSFRDSTDEV). 2 stretches are compositionally biased toward polar residues: residues 699 to 716 (SSRSSPMSWRLGQGSSPR) and 727 to 737 (PPRSSAGSTTV). A compositionally biased stretch (low complexity) spans 847–860 (DSSSVSSGLSDTLD). Residues 874-886 (GISSRKSKAAQSN) show a composition bias toward polar residues. Over residues 919 to 932 (PSCKWKTSSPSSSC) the composition is skewed to low complexity. Residues 939-950 (QKTGLPMSQTGS) show a composition bias toward polar residues. A compositionally biased stretch (basic and acidic residues) spans 977-989 (GKTDDAKASEKGK). The segment covering 1110–1137 (SSSGGSSVVSRSGHRSSSSSIDSNVSGK) has biased composition (low complexity). The segment covering 1163 to 1172 (GRSSPVTINQ) has biased composition (polar residues). 2 stretches are compositionally biased toward low complexity: residues 1185-1202 (GTGLPTSPKSSPTSTQSG) and 1223-1234 (GSKASSKPSSPG). Residues 1266–1276 (GSLGSMGGQSG) are compositionally biased toward gly residues. Residues 1292–1305 (SPASSPASGLSLPS) are compositionally biased toward low complexity. 2 stretches are compositionally biased toward polar residues: residues 1313–1339 (NLSSSSAGSKDTLSCHSMTSLHTSSES) and 1354–1363 (RTGSVKSTLS). The span at 1381–1391 (TSHEEGKEWLR) shows a compositional bias: basic and acidic residues. Positions 1392 to 1412 (SHSTGGLQDTGSPLSPPGTTC) are enriched in polar residues. A coiled-coil region spans residues 1499 to 1586 (SSLYSAQIRK…TDAQTAIQVA (88 aa)). Disordered stretches follow at residues 1602–1672 (QHSS…PSSP), 1756–1792 (NDRLKSSGNTTPAATPAKTARPPSETSSTSSSSSRQS), and 2207–2269 (GYSS…ESAL). 2 stretches are compositionally biased toward low complexity: residues 1605–1623 (SESMSSINSAASHSSLGSA) and 1765–1792 (TTPAATPAKTARPPSETSSTSSSSSRQS). The stretch at 1697–1765 (CECTEAEAEI…NDRLKSSGNT (69 aa)) forms a coiled coil. Residues 2208–2224 (YSSSKDGAASKQVSQSD) show a composition bias toward polar residues.

It belongs to the Nav/unc-53 family. Interacts with F-actin.

It localises to the nucleus outer membrane. It is found in the golgi apparatus. The protein resides in the cell projection. Its subcellular location is the lamellipodium. The protein localises to the filopodium. Its function is as follows. Involved in liver and heart organogenesis during embryo development. Plays a role in the migration of hepatoblasts from the intestinal endoderm during liver organogenesis; possibly by modulating actin polymerization during hepatoblast outgrowth. May be involved in neuron regeneration. The sequence is that of Neuron navigator 3 (nav3) from Danio rerio (Zebrafish).